A 446-amino-acid polypeptide reads, in one-letter code: MTSVEQSRQLVTEIPGPVSLELAKRLNAAVPRGVGVTLPVFVTRAAGGVIEDVDGNRLIDLGSGIAVTTIGNSSPRVVDAVRAQVADFTHTCFIITPYEEYVAVTEQLNRITPGSGEKRSVLFNSGAEAVENSIKVARSYTRKPAVVAFDHAYHGRTNLTMALTAKSMPYKSGFGPFAPEIYRAPLSYPYRDGLLNKDLATDGKLAGARAINVIEKQVGADDLAAVIIEPIQGEGGFIVPAEGFLATLLDWCRKNNVMFIADEVQTGFARTGAMFACEHDGIVPDLICTAKGIADGLPLAAVTGRAEIMNAPHVSGLGGTFGGNPVACAAALATITTIENDGLIQRAQQIERLITDRLLRLQDADDRIGDVRGRGAMIAVELVKSGTAEPDPELTEKVATAAHATGVIILTCGMFGNIIRLLPPLTISDELLAEGLDILSRILGDF.

Position 291 is an N6-(pyridoxal phosphate)lysine (Lys291).

This sequence belongs to the class-III pyridoxal-phosphate-dependent aminotransferase family. Pyridoxal 5'-phosphate serves as cofactor.

The catalysed reaction is 4-aminobutanoate + 2-oxoglutarate = succinate semialdehyde + L-glutamate. It carries out the reaction (S)-3-amino-2-methylpropanoate + 2-oxoglutarate = 2-methyl-3-oxopropanoate + L-glutamate. Its pathway is amino-acid degradation; 4-aminobutanoate degradation. The polypeptide is 4-aminobutyrate aminotransferase (gabT) (Mycobacterium leprae (strain TN)).